The sequence spans 65 residues: MNMKILVLVAVLCLVVSTHAERHSKTDMEDSPMIQERKYLPPGKPCYEATQKIPCCGVCSHNNCT.

The N-terminal stretch at 1 to 20 (MNMKILVLVAVLCLVVSTHA) is a signal peptide. Residues 21-37 (ERHSKTDMEDSPMIQER) constitute a propeptide that is removed on maturation. Cystine bridges form between C46–C59 and C55–C64.

This sequence belongs to the neurotoxin 36 family. 02 subfamily. In terms of tissue distribution, expressed by the venom gland.

The protein localises to the secreted. Its function is as follows. Reversibly blocks N-type calcium channels (Cav2.2/CACNA1B) in rat dorsal root ganglion cells. Elicits no toxic symptoms in either vertebrates or invertebrates during a period of 48 hours post-injection, when it was assayed in vivo by direct injection into mice and cockroaches. In Cyriopagopus hainanus (Chinese bird spider), this protein is Hainantoxin-X-3.